Here is a 486-residue protein sequence, read N- to C-terminus: Probable transporter MCH1 (486 aa).

12 consecutive transmembrane segments (helical) span residues 31–51 (IFALSILGTLSAASISLFSMY), 68–88 (SVSISSLLGMYLLMPVIGYLG), 95–115 (YLALFSWITFPASYSIASGIF), 135–155 (EMALCFFFIGASTSCMYYASL), 174–194 (TYTPGYAIWGPVAAFGLSSLW), 211–231 (VAGIFLFFAGLYAVICGIIFF), 268–288 (FFTDKTAWLFLLCFVFIGGPF), 312–333 (FSTHVSLFATFSTVSRLVVGFS), 349–369 (VIALVAACIHLMVPSGIFTVF), 377–397 (VVTIVNGFSYGSSFTLVPTIV), 409–429 (IWGSFILALAVGSLGYGLLFA), and 457–477 (FVITGTGLAFAAAAVFFIWVF).

The protein belongs to the major facilitator superfamily.

The protein resides in the vacuole membrane. Its function is as follows. Probable transporter. This chain is Probable transporter MCH1 (MCH1), found in Yarrowia lipolytica (strain CLIB 122 / E 150) (Yeast).